We begin with the raw amino-acid sequence, 121 residues long: Large ribosomal subunit protein bL12 (121 aa).

The protein belongs to the bacterial ribosomal protein bL12 family. As to quaternary structure, homodimer. Part of the ribosomal stalk of the 50S ribosomal subunit. Forms a multimeric L10(L12)X complex, where L10 forms an elongated spine to which 2 to 4 L12 dimers bind in a sequential fashion. Binds GTP-bound translation factors.

Functionally, forms part of the ribosomal stalk which helps the ribosome interact with GTP-bound translation factors. Is thus essential for accurate translation. This is Large ribosomal subunit protein bL12 from Pseudomonas fluorescens (strain SBW25).